Reading from the N-terminus, the 164-residue chain is CDP-archaeol synthase (164 aa).

4 helical membrane passes run 3 to 23 (LTVFFLLIWPPYVANGSAVFA), 55 to 75 (AIGIATGTVLGYFPNLVYHVI), 77 to 97 (VFDAFVLSASAVLGDLIGAFI), and 122 to 142 (FLVYSLFREIPVVYVLAAVVI).

This sequence belongs to the CDP-archaeol synthase family. Mg(2+) serves as cofactor.

It localises to the cell membrane. The enzyme catalyses 2,3-bis-O-(geranylgeranyl)-sn-glycerol 1-phosphate + CTP + H(+) = CDP-2,3-bis-O-(geranylgeranyl)-sn-glycerol + diphosphate. The protein operates within membrane lipid metabolism; glycerophospholipid metabolism. In terms of biological role, catalyzes the formation of CDP-2,3-bis-(O-geranylgeranyl)-sn-glycerol (CDP-archaeol) from 2,3-bis-(O-geranylgeranyl)-sn-glycerol 1-phosphate (DGGGP) and CTP. This reaction is the third ether-bond-formation step in the biosynthesis of archaeal membrane lipids. This chain is CDP-archaeol synthase, found in Pyrobaculum aerophilum (strain ATCC 51768 / DSM 7523 / JCM 9630 / CIP 104966 / NBRC 100827 / IM2).